We begin with the raw amino-acid sequence, 783 residues long: BMP/retinoic acid-inducible neural-specific protein 2 (783 aa).

An N-terminal signal peptide occupies residues 1 to 33; the sequence is MRWPCSSWFRGLWPEAAPWAVLLALGVPGWVLA. An MACPF domain is found at 85 to 281; the sequence is RYRIYREFAR…FVAAALSYIT (197 aa). N-linked (GlcNAc...) asparagine glycosylation is found at N185, N354, N473, N579, N626, and N658.

This sequence belongs to the BRINP family. As to expression, weakly expressed in embryonic stem (ES) cells. Strongly expressed in ES-derived neural stem cells (NSCs).

The protein resides in the secreted. Functionally, inhibits neuronal cell proliferation by negative regulation of the cell cycle transition. The protein is BMP/retinoic acid-inducible neural-specific protein 2 (Brinp2) of Mus musculus (Mouse).